The chain runs to 420 residues: Glutaryl-CoA dehydrogenase, mitochondrial (420 aa).

Position 125-126 (125-126 (RS)) interacts with substrate. FAD is bound by residues 164–167 (FGLT), serine 173, and 198–200 (WIT). Serine 173 provides a ligand contact to substrate. Substrate is bound by residues 273–277 (FSCLN) and arginine 280. Glutamate 400 serves as the catalytic Proton acceptor. FAD contacts are provided by threonine 402 and phenylalanine 420.

It belongs to the acyl-CoA dehydrogenase family. Requires FAD as cofactor.

The protein localises to the mitochondrion matrix. The catalysed reaction is glutaryl-CoA + oxidized [electron-transfer flavoprotein] + 2 H(+) = (2E)-butenoyl-CoA + reduced [electron-transfer flavoprotein] + CO2. The protein operates within amino-acid metabolism; lysine degradation. It functions in the pathway amino-acid metabolism; tryptophan metabolism. In Dictyostelium discoideum (Social amoeba), this protein is Glutaryl-CoA dehydrogenase, mitochondrial (gcdh).